The sequence spans 319 residues: Acetyl-coenzyme A carboxylase carboxyl transferase subunit alpha (319 aa).

Residues 38 to 292 (ALDKKAADLL…GKAIASMLAG (255 aa)) form the CoA carboxyltransferase C-terminal domain.

This sequence belongs to the AccA family. Acetyl-CoA carboxylase is a heterohexamer composed of biotin carboxyl carrier protein (AccB), biotin carboxylase (AccC) and two subunits each of ACCase subunit alpha (AccA) and ACCase subunit beta (AccD).

The protein localises to the cytoplasm. It catalyses the reaction N(6)-carboxybiotinyl-L-lysyl-[protein] + acetyl-CoA = N(6)-biotinyl-L-lysyl-[protein] + malonyl-CoA. Its pathway is lipid metabolism; malonyl-CoA biosynthesis; malonyl-CoA from acetyl-CoA: step 1/1. In terms of biological role, component of the acetyl coenzyme A carboxylase (ACC) complex. First, biotin carboxylase catalyzes the carboxylation of biotin on its carrier protein (BCCP) and then the CO(2) group is transferred by the carboxyltransferase to acetyl-CoA to form malonyl-CoA. The protein is Acetyl-coenzyme A carboxylase carboxyl transferase subunit alpha of Jannaschia sp. (strain CCS1).